Here is a 45-residue protein sequence, read N- to C-terminus: uncharacterized protein (45 aa).

It belongs to the asfivirus C62L family.

This is an uncharacterized protein from Ornithodoros (relapsing fever ticks).